A 308-amino-acid chain; its full sequence is 4-diphosphocytidyl-2-C-methyl-D-erythritol kinase (308 aa).

Residue Lys-23 is part of the active site. 108–118 is an ATP binding site; the sequence is PVAAGIGGGSA. The active site involves Asp-150.

Belongs to the GHMP kinase family. IspE subfamily.

The enzyme catalyses 4-CDP-2-C-methyl-D-erythritol + ATP = 4-CDP-2-C-methyl-D-erythritol 2-phosphate + ADP + H(+). It functions in the pathway isoprenoid biosynthesis; isopentenyl diphosphate biosynthesis via DXP pathway; isopentenyl diphosphate from 1-deoxy-D-xylulose 5-phosphate: step 3/6. Functionally, catalyzes the phosphorylation of the position 2 hydroxy group of 4-diphosphocytidyl-2C-methyl-D-erythritol. The sequence is that of 4-diphosphocytidyl-2-C-methyl-D-erythritol kinase from Nitrobacter winogradskyi (strain ATCC 25391 / DSM 10237 / CIP 104748 / NCIMB 11846 / Nb-255).